The following is a 335-amino-acid chain: DNA-directed RNA polymerase subunit alpha (335 aa).

The interval 1-231 is alpha N-terminal domain (alpha-NTD); it reads MVREKVTVST…DLFIPFLHME (231 aa). Residues 262-335 are alpha C-terminal domain (alpha-CTD); sequence KKKLSLESIF…FALDLPKNLN (74 aa).

It belongs to the RNA polymerase alpha chain family. As to quaternary structure, in plastids the minimal PEP RNA polymerase catalytic core is composed of four subunits: alpha, beta, beta', and beta''. When a (nuclear-encoded) sigma factor is associated with the core the holoenzyme is formed, which can initiate transcription.

The protein resides in the plastid. It carries out the reaction RNA(n) + a ribonucleoside 5'-triphosphate = RNA(n+1) + diphosphate. DNA-dependent RNA polymerase catalyzes the transcription of DNA into RNA using the four ribonucleoside triphosphates as substrates. In Cuscuta reflexa (Southern Asian dodder), this protein is DNA-directed RNA polymerase subunit alpha.